Reading from the N-terminus, the 318-residue chain is Mevalonate 3-kinase (318 aa).

Residue Leu-19 participates in substrate binding. ATP-binding positions include 96–100 (YSSQN) and 105–108 (SGSS). 2 residues coordinate substrate: Glu-140 and Arg-144. ATP is bound by residues Arg-185 and Ser-188.

The protein belongs to the GHMP kinase family. As to quaternary structure, homodimer.

It catalyses the reaction (R)-mevalonate + ATP = (R)-3-phosphomevalonate + ADP + H(+). It participates in isoprenoid biosynthesis; isopentenyl diphosphate biosynthesis via mevalonate pathway. In terms of biological role, catalyzes the phosphorylation of mevalonate (MVA) to yield mevalonate-3-phosphate. Functions in an alternative mevalonate pathway, only present in extreme acidophiles of the Thermoplasmatales order, which passes through mevalonate 3-phosphate rather than mevalonate 5-phosphate. This Thermoplasma acidophilum (strain ATCC 25905 / DSM 1728 / JCM 9062 / NBRC 15155 / AMRC-C165) protein is Mevalonate 3-kinase.